A 151-amino-acid polypeptide reads, in one-letter code: Calmodulin-like protein 9 (151 aa).

EF-hand domains lie at 8-43 (EQIQ…MGKN), 44-79 (PKAE…NTSQ), 81-116 (SASD…MGMK), and 117-151 (ITAE…AASY). Aspartate 94, aspartate 96, aspartate 98, glutamate 105, aspartate 130, aspartate 132, aspartate 134, and glutamate 141 together coordinate Ca(2+).

The protein belongs to the calmodulin family. In terms of assembly, interacts with IQD1. Interacts with ILK1. Binds to ABCG36. As to expression, expressed in leaves, flowers and siliques.

Its function is as follows. Potential calcium sensor. The chain is Calmodulin-like protein 9 from Arabidopsis thaliana (Mouse-ear cress).